A 436-amino-acid chain; its full sequence is 3-ketoacyl-CoA thiolase (436 aa).

C99 acts as the Acyl-thioester intermediate in catalysis. Residues H392 and C422 each act as proton acceptor in the active site.

This sequence belongs to the thiolase-like superfamily. Thiolase family. As to quaternary structure, heterotetramer of two alpha chains (FadJ) and two beta chains (FadI).

The protein localises to the cytoplasm. It catalyses the reaction an acyl-CoA + acetyl-CoA = a 3-oxoacyl-CoA + CoA. It functions in the pathway lipid metabolism; fatty acid beta-oxidation. Its function is as follows. Catalyzes the final step of fatty acid oxidation in which acetyl-CoA is released and the CoA ester of a fatty acid two carbons shorter is formed. This Salmonella typhi protein is 3-ketoacyl-CoA thiolase.